Reading from the N-terminus, the 437-residue chain is MTHYHFVGIKGSGMSSLAQIMHDLGHEVQGSDIENYVFTEVALRNKGIKILPFDANNIKEDMVVIQGNAFASSHEEIVRAHQLKLDVVSYNDFLGQIIDQYTSVAVTGAHGKTSTTGLLSHVMNGDKKTSFLIGDGTGMGLPESDYFAFEACEYRRHFLSYKPDYAIMTNIDFDHPDYFKDINDVFDAFQEMAHNVKKGIIAWGDDEHLRKIEADVPIYYYGFKDSDDIYAQNIQITDKGTAFDVYVDGEFYDHFLSPQYGDHTVLNALAVIAISYLEKLDVTNIKEALETFGGVKRRFNETTIANQVIVDDYAHHPREISATIETARKKYPHKEVVAVFQPHTFSRTQAFLNEFAESLSKADRVFLCEIFGSIRENTGALTIQDLIDKIEGASLINEDSINVLEQFDNAVILFMGAGDIQKLQNAYLDKLGMKNAF.

108-114 (GAHGKTS) lines the ATP pocket.

It belongs to the MurCDEF family.

The protein resides in the cytoplasm. It catalyses the reaction UDP-N-acetyl-alpha-D-muramate + L-alanine + ATP = UDP-N-acetyl-alpha-D-muramoyl-L-alanine + ADP + phosphate + H(+). Its pathway is cell wall biogenesis; peptidoglycan biosynthesis. Its function is as follows. Cell wall formation. This Staphylococcus aureus (strain COL) protein is UDP-N-acetylmuramate--L-alanine ligase.